Here is a 308-residue protein sequence, read N- to C-terminus: Ribosomal RNA small subunit methyltransferase H (308 aa).

S-adenosyl-L-methionine-binding positions include 46 to 48 (AGH), Asp63, Tyr87, Asp108, and Gln115. The tract at residues 269 to 308 (TKRPVEASEEERGRNPRARSAKLRAAEKVAAPEGLPEVEV) is disordered. The span at 271-282 (RPVEASEEERGR) shows a compositional bias: basic and acidic residues.

Belongs to the methyltransferase superfamily. RsmH family.

It localises to the cytoplasm. The enzyme catalyses cytidine(1402) in 16S rRNA + S-adenosyl-L-methionine = N(4)-methylcytidine(1402) in 16S rRNA + S-adenosyl-L-homocysteine + H(+). Specifically methylates the N4 position of cytidine in position 1402 (C1402) of 16S rRNA. The sequence is that of Ribosomal RNA small subunit methyltransferase H from Deinococcus geothermalis (strain DSM 11300 / CIP 105573 / AG-3a).